Consider the following 699-residue polypeptide: MEPFCPLLLASFSLSLARAGQGNDTTPTESNWTSTTAGPPDPGASQPLLTWLLLPLLLLLFLLAAYFFRFRKQRKAVVSSNDKKMPNGILEEQEQQRVMLLSRSPSGPKKFFPIPVEHLEEEIRVRSADDCKRFREEFNSLPSGHIQGTFELANKEENREKNRYPNILPNDHCRVILSQVDGIPCSDYINASYIDGYKEKNKFIAAQGPKQETVNDFWRMVWEQRSATIVMLTNLKERKEEKCYQYWPDQGCWTYGNIRVCVEDCVVLVDYTIRKFCIHPQLPDSCKAPRLVSQLHFTSWPDFGVPFTPIGMLKFLKKVKTLNPSHAGPIVVHCSAGVGRTGTFIVIDAMMDMIHSEQKVDVFEFVSRIRNQRPQMVQTDVQYTFIYQALLEYYLYGDTELDVSSLERHLQTLHSTATHFDKIGLEEEFRKLTNVRIMKENMRTGNLPANMKKARVIQIIPYDFNRVILSMKRGQEFTDYINASFIDGYRQKDYFMATQGPLAHTVEDFWRMVWEWKSHTIVMLTEVQEREQDKCYQYWPTEGSVTHGDITIEIKSDTLSEAISVRDFLVTFKQPLARQEEQVRMVRQFHFHGWPEVGIPAEGKGMIDLIAAVQKQQQQTGNHPITVHCSAGAGRTGTFIALSNILERVKAEGLLDVFQAVKSLRLQRPHMVQTLEQYEFCYKVVQDFIDIFSDYANFK.

An N-terminal signal peptide occupies residues 1–19 (MEPFCPLLLASFSLSLARA). Over residues 20-36 (GQGNDTTPTESNWTSTT) the composition is skewed to low complexity. Residues 20–40 (GQGNDTTPTESNWTSTTAGPP) are disordered. At 20-45 (GQGNDTTPTESNWTSTTAGPPDPGAS) the chain is on the extracellular side. 2 N-linked (GlcNAc...) asparagine glycosylation sites follow: Asn23 and Asn31. A helical membrane pass occupies residues 46 to 68 (QPLLTWLLLPLLLLLFLLAAYFF). Residues 69–699 (RFRKQRKAVV…DIFSDYANFK (631 aa)) are Cytoplasmic-facing. Tyrosine-protein phosphatase domains follow at residues 134-393 (FREE…LLEY) and 425-688 (LEEE…VQDF). Residues Asp302, 334-340 (CSAGVGR), and Gln378 contribute to the substrate site. Residue Cys334 is the Phosphocysteine intermediate of the active site. Cys629 functions as the Phosphocysteine intermediate in the catalytic mechanism. Tyr695 carries the phosphotyrosine modification.

This sequence belongs to the protein-tyrosine phosphatase family. Receptor class 4 subfamily. As to quaternary structure, monomer. Isoform 2: Homodimer. Can form oligomers. Dimerization is increased by oxidative stress and decreased by EGFR. Isoform 2 interacts with GRB2. In terms of processing, a catalytically active cytoplasmic form (p65) is produced by proteolytic cleavage of either isoform 1, isoform 2 or isoform 3. Phosphorylated on tyrosine residues by tyrosine kinase Neu. Post-translationally, glycosylated. Isoform 2 is expressed in the spleen and thymus (at protein level). Detected in fibroblasts, myeloid cells, macrophages, and T-cells but not in B-cell lines. Isoform 1 and isoform 2 are expressed predominantly in the brain, testes, and lungs, with lower levels present in lymph nodes, thymus, spleen, heart and mammary glands. Isoform 1 is expressed in osteoclasts and not in osteoblasts and its expression is related to osteoclast differentiation. It is also expressed in the erythrocytes. Isoform 2 is strongly expressed in skeletal muscle and L6 skeletal muscle cell line.

The protein resides in the cell membrane. Its subcellular location is the cytoplasm. The catalysed reaction is O-phospho-L-tyrosyl-[protein] + H2O = L-tyrosyl-[protein] + phosphate. Its activity is regulated as follows. Inhibited by alendronate (ALN), orthovanadate, and phenylarsine oxide (PAO). Functionally, acts as a negative regulator of insulin receptor (IR) signaling and is involved in insulin-induced glucose metabolism mainly through direct dephosphorylation and inactivation of IR in hepatocytes and liver. Plays a critical role in signaling transduction pathways and phosphoprotein network topology in red blood cells. May play a role in osteoclast formation and function. Acts as a negative regulator of insulin receptor (IR) signaling in skeletal muscle. Regulates insulin-induced tyrosine phosphorylation of insulin receptor (IR) and insulin receptor substrate 1 (IRS-1), phosphorylation of protein kinase B and glycogen synthase kinase-3 and insulin induced stimulation of glucose uptake. In terms of biological role, isoform 1 and isoform 2 act as a negative regulator of FceRI-mediated signal transduction leading to cytokine production and degranulation, most likely by acting at the level of SYK to affect downstream events such as phosphorylation of SLP76 and LAT and mobilization of Ca(2+). The protein is Receptor-type tyrosine-protein phosphatase epsilon (Ptpre) of Mus musculus (Mouse).